The primary structure comprises 107 residues: Putative septation protein SpoVG (107 aa).

Residues 82-107 (ETDEVIPDKNAQPSSDSEDNGSEEEA) form a disordered region. A compositionally biased stretch (acidic residues) spans 97 to 107 (DSEDNGSEEEA).

This sequence belongs to the SpoVG family.

Its function is as follows. Could be involved in septation. The protein is Putative septation protein SpoVG of Staphylococcus carnosus (strain TM300).